Here is a 270-residue protein sequence, read N- to C-terminus: NAD(P)H-hydrate epimerase (270 aa).

Residues 25–234 form the YjeF N-terminal domain; that stretch reads FQQLMDLMQN…DLLAPEAIYQ (210 aa). A (6S)-NADPHX-binding site is contributed by 73–77; sequence DNGGQ. 2 residues coordinate K(+): N74 and D144. (6S)-NADPHX contacts are provided by residues 148 to 154 and E177; that span reads GVGLYGH. K(+) is bound at residue T180.

Belongs to the NnrE/AIBP family. Requires K(+) as cofactor.

The catalysed reaction is (6R)-NADHX = (6S)-NADHX. It carries out the reaction (6R)-NADPHX = (6S)-NADPHX. Catalyzes the epimerization of the S- and R-forms of NAD(P)HX, a damaged form of NAD(P)H that is a result of enzymatic or heat-dependent hydration. This is a prerequisite for the S-specific NAD(P)H-hydrate dehydratase to allow the repair of both epimers of NAD(P)HX. The chain is NAD(P)H-hydrate epimerase from Legionella pneumophila subsp. pneumophila (strain Philadelphia 1 / ATCC 33152 / DSM 7513).